The chain runs to 524 residues: Ribose import ATP-binding protein RbsA (524 aa).

2 ABC transporter domains span residues 17–252 (LQLD…GRSI) and 263–505 (IGQP…VSQV). 49–56 (GENGAGKS) is a binding site for ATP.

The protein belongs to the ABC transporter superfamily. Ribose importer (TC 3.A.1.2.1) family. In terms of assembly, the complex is composed of an ATP-binding protein (RbsA), two transmembrane proteins (RbsC) and a solute-binding protein (RbsB).

Its subcellular location is the cell membrane. It carries out the reaction D-ribose(out) + ATP + H2O = D-ribose(in) + ADP + phosphate + H(+). Part of the ABC transporter complex RbsABC involved in ribose import. Responsible for energy coupling to the transport system. This chain is Ribose import ATP-binding protein RbsA, found in Corynebacterium glutamicum (strain ATCC 13032 / DSM 20300 / JCM 1318 / BCRC 11384 / CCUG 27702 / LMG 3730 / NBRC 12168 / NCIMB 10025 / NRRL B-2784 / 534).